Here is a 192-residue protein sequence, read N- to C-terminus: RNA-free ribonuclease P (192 aa).

The protein belongs to the HARP family.

The enzyme catalyses Endonucleolytic cleavage of RNA, removing 5'-extranucleotides from tRNA precursor.. In terms of biological role, RNA-free RNase P that catalyzes the removal of the 5'-leader sequence from pre-tRNA to produce the mature 5'-terminus. The chain is RNA-free ribonuclease P from Alkalilimnicola ehrlichii (strain ATCC BAA-1101 / DSM 17681 / MLHE-1).